The primary structure comprises 493 residues: MKKTKNNYYTRPLAIGLSTFALASIVYGGIQNETHASEKSNMDVSKKVAEVETSKAPVENTAEVETSKAPVENTAEVETSKAPVENTAEVETSKAPVENTAEVETSKAPVENTAEVETSKAPVENTAEVETSKAPVENTAEVETSKAPVENTAEVETSKAPVENTAEVETSKAPVENTAEVETSKAPVENTAEVETSKAPVENTAEVETSKAPVENTAEVETSKAPVENTAEVETSKALVQNRTALRAATHEHSAQWLNNYKKGYGYGPYPLGINGGMHYGVDFFMNIGTPVKAISSGKIVEAGWSNYGGGNQIGLIENDGVHRQWYMHLSKYNVKVGDYVKAGQIIGWSGSTGYSTAPHLHFQRMVNSFSNSTAQDPMPFLKSAGYGKAGGTVTPTPNTGWKTNKYGTLYKSESASFTPNTDIITRTTGPFRSMPQSGVLKAGQTIHYDEVMKQDGHVWVGYTGNSGQRIYLPVRTWNKSTNTLGVLWGTIK.

The N-terminal stretch at 1 to 23 (MKKTKNNYYTRPLAIGLSTFALA) is a signal peptide. Positions 24-247 (SIVYGGIQNE…ALVQNRTALR (224 aa)) are excised as a propeptide. A run of 14 repeats spans residues 49–61 (AEVETSKAPVENT), 62–74 (AEVETSKAPVENT), 75–87 (AEVETSKAPVENT), 88–100 (AEVETSKAPVENT), 101–113 (AEVETSKAPVENT), 114–126 (AEVETSKAPVENT), 127–139 (AEVETSKAPVENT), 140–152 (AEVETSKAPVENT), 153–165 (AEVETSKAPVENT), 166–178 (AEVETSKAPVENT), 179–191 (AEVETSKAPVENT), 192–204 (AEVETSKAPVENT), 205–217 (AEVETSKAPVENT), and 218–230 (AEVETSKAPVENT). Residues 49–243 (AEVETSKAPV…ETSKALVQNR (195 aa)) form a 15 X 13 AA approximate tandem repeats of A-E-V-E-T-S-K-A-P-V-E-N-T region. Residues 52 to 232 (ETSKAPVENT…SKAPVENTAE (181 aa)) form a disordered region. One copy of the 15; approximate repeat lies at 231-243 (AEVETSKALVQNR). 2 residues coordinate Zn(2+): His279 and Asp283. Residue His360 is part of the active site. His362 is a binding site for Zn(2+). Positions 413–481 (SESASFTPNT…YLPVRTWNKS (69 aa)) constitute an SH3b domain.

The protein belongs to the peptidase M23B family. Monomer. Requires Zn(2+) as cofactor.

Its subcellular location is the secreted. The catalysed reaction is Hydrolysis of the -Gly-|-Gly- bond in the pentaglycine inter-peptide link joining staphylococcal cell wall peptidoglycans.. In terms of biological role, lyses staphylococcal cells by hydrolyzing the polyglycine interpeptide bridges of the peptidoglycan. This chain is Lysostaphin (lss), found in Staphylococcus simulans.